Here is a 387-residue protein sequence, read N- to C-terminus: Pepsin A-5 (387 aa).

An N-terminal signal peptide occupies residues 1–15 (MKWLWVLGLVALSEC). A propeptide spans 16 to 62 (LVKIPLMKIKSMRENLRESQVLKDYLEKYPRSRAHVLLEQRRNPAVT) (activation peptide). The Peptidase A1 domain maps to 74–384 (YIGIISIGTP…DRANNRIGLA (311 aa)). Asp-92 is an active-site residue. Cystine bridges form between Cys-105-Cys-110 and Cys-266-Cys-270. Asp-275 is an active-site residue. A disulfide bond links Cys-309 and Cys-343.

The protein belongs to the peptidase A1 family. In terms of tissue distribution, expressed in glandular chief cells of the neonatal stomach. Expressed in yolk sacs of the placenta (at protein level).

It localises to the secreted. The enzyme catalyses Preferential cleavage: hydrophobic, preferably aromatic, residues in P1 and P1' positions. Cleaves 1-Phe-|-Val-2, 4-Gln-|-His-5, 13-Glu-|-Ala-14, 14-Ala-|-Leu-15, 15-Leu-|-Tyr-16, 16-Tyr-|-Leu-17, 23-Gly-|-Phe-24, 24-Phe-|-Phe-25 and 25-Phe-|-Tyr-26 bonds in the B chain of insulin.. Its activity is regulated as follows. Inhibited by pepstatin A. Functionally, shows particularly broad specificity; although bonds involving phenylalanine and leucine are preferred, many others are also cleaved to some extent. May play a role as a specialized neonatal digestive enzyme. The sequence is that of Pepsin A-5 from Mus musculus (Mouse).